The primary structure comprises 107 residues: U1-lycotoxin-Ls1e (107 aa).

Residues methionine 1–serine 20 form the signal peptide. A propeptide spanning residues glutamate 21–arginine 41 is cleaved from the precursor. Intrachain disulfides connect cysteine 44–cysteine 59, cysteine 51–cysteine 68, cysteine 58–cysteine 86, and cysteine 70–cysteine 84.

This sequence belongs to the neurotoxin 19 (CSTX) family. 04 (U1-Lctx) subfamily. Expressed by the venom gland.

It localises to the secreted. The protein is U1-lycotoxin-Ls1e of Lycosa singoriensis (Wolf spider).